We begin with the raw amino-acid sequence, 118 residues long: Non-specific lipid-transfer protein A (118 aa).

The N-terminal stretch at 1–25 (MAGVMKLACLVLACMIVAGPITANR) is a signal peptide. 4 disulfides stabilise this stretch: cysteine 29-cysteine 76, cysteine 39-cysteine 53, cysteine 54-cysteine 100, and cysteine 74-cysteine 114.

It belongs to the plant LTP family.

Plant non-specific lipid-transfer proteins transfer phospholipids as well as galactolipids across membranes. May play a role in wax or cutin deposition in the cell walls of expanding epidermal cells and certain secretory tissues. The chain is Non-specific lipid-transfer protein A (WAX9A) from Brassica oleracea var. italica (Broccoli).